Here is a 338-residue protein sequence, read N- to C-terminus: Glycerol-3-phosphate dehydrogenase [NAD(P)+] (338 aa).

NADPH is bound by residues serine 12, tryptophan 13, and lysine 110. Lysine 110, glycine 141, and serine 143 together coordinate sn-glycerol 3-phosphate. Alanine 145 provides a ligand contact to NADPH. Lysine 196, aspartate 249, serine 259, arginine 260, and asparagine 261 together coordinate sn-glycerol 3-phosphate. The active-site Proton acceptor is the lysine 196. Arginine 260 contributes to the NADPH binding site. 2 residues coordinate NADPH: valine 284 and glutamate 286.

It belongs to the NAD-dependent glycerol-3-phosphate dehydrogenase family.

Its subcellular location is the cytoplasm. It carries out the reaction sn-glycerol 3-phosphate + NAD(+) = dihydroxyacetone phosphate + NADH + H(+). The enzyme catalyses sn-glycerol 3-phosphate + NADP(+) = dihydroxyacetone phosphate + NADPH + H(+). The protein operates within membrane lipid metabolism; glycerophospholipid metabolism. Its function is as follows. Catalyzes the reduction of the glycolytic intermediate dihydroxyacetone phosphate (DHAP) to sn-glycerol 3-phosphate (G3P), the key precursor for phospholipid synthesis. This chain is Glycerol-3-phosphate dehydrogenase [NAD(P)+], found in Pediococcus pentosaceus (strain ATCC 25745 / CCUG 21536 / LMG 10740 / 183-1w).